Here is a 389-residue protein sequence, read N- to C-terminus: Mannuronan synthase (389 aa).

The PilZ domain occupies 16–116 (QRQFARVKLP…EVAALRYLIT (101 aa)).

The protein belongs to the Alg44 family.

The protein localises to the periplasm. The enzyme catalyses [(1-&gt;4)-beta-D-mannuronosyl](n) + GDP-alpha-D-mannuronate = [(1-&gt;4)-beta-D-mannuronosyl](n+1) + GDP + H(+). The protein operates within glycan biosynthesis; alginate biosynthesis. Its function is as follows. Required for alginate biosynthesis. The chain is Mannuronan synthase (alg44) from Pseudomonas aeruginosa (strain ATCC 15692 / DSM 22644 / CIP 104116 / JCM 14847 / LMG 12228 / 1C / PRS 101 / PAO1).